The sequence spans 178 residues: ATP-dependent protease subunit HslV (178 aa).

The active site involves Thr-7. Na(+) contacts are provided by Gly-162, Cys-165, and Thr-168.

Belongs to the peptidase T1B family. HslV subfamily. As to quaternary structure, a double ring-shaped homohexamer of HslV is capped on each side by a ring-shaped HslU homohexamer. The assembly of the HslU/HslV complex is dependent on binding of ATP.

Its subcellular location is the cytoplasm. It catalyses the reaction ATP-dependent cleavage of peptide bonds with broad specificity.. Allosterically activated by HslU binding. In terms of biological role, protease subunit of a proteasome-like degradation complex believed to be a general protein degrading machinery. This Burkholderia mallei (strain ATCC 23344) protein is ATP-dependent protease subunit HslV.